Here is a 417-residue protein sequence, read N- to C-terminus: MENTSVNKEPSIIVGGFVLGGAMIGAGMFSLPTIMSGAWFINSLFILFIVCFFMFHSGIYILECISKYGAGTNYFDISKELLPKWACYIANASLIFVLYILIYAYISAAGSIIYEASLLYGINFNLRAIFFIFTIALGATIWWGGACASRLTSIFLFIKIVLFILAFSGLFFKAKGDLLFSATFAGKSQLYLYPFIFIIIPYAITSFGYHGNVCSLYKLYNQNERKVVKSCIIGCLLALVIYLLWMIGTMGNLPREQFITIIQKGGNLDAFIDSLYTVLNSKYIEGFLLWFSISAVFCSFLGVAIGLFDYILASLKFKDNKTGRLKSGVLCFTPPLLLCLFFPNGFLIAIAYAGTAACVWAIICPAVMALKARQKFPNSGFKVWGGKKLIYAVIAFGVVGIICQSWRNLIYCLFIVK.

Transmembrane regions (helical) follow at residues 12 to 32 (IIVG…FSLP), 34 to 54 (IMSG…CFFM), 94 to 114 (LIFV…SIIY), 128 to 148 (AIFF…GACA), 152 to 172 (TSIF…GLFF), 190 to 210 (LYLY…FGYH), 231 to 251 (CIIG…GTMG), 288 to 308 (LLWF…IGLF), 325 to 345 (LKSG…FPNG), 346 to 366 (FLIA…ICPA), and 383 to 403 (VWGG…GIIC).

This sequence belongs to the amino acid/polyamine transporter 2 family. Mtr/TnaB/TyrP permease subfamily.

It localises to the cell inner membrane. In terms of biological role, involved in tryptophan transport across the cytoplasmic membrane. Plays a role in transporting tryptophan which is to be used catabolically. This is Low affinity tryptophan permease (tnaB) from Proteus vulgaris.